A 264-amino-acid chain; its full sequence is tRNA pseudouridine synthase A (264 aa).

The active-site Nucleophile is the aspartate 51. Tyrosine 109 is a substrate binding site.

This sequence belongs to the tRNA pseudouridine synthase TruA family. In terms of assembly, homodimer.

It catalyses the reaction uridine(38/39/40) in tRNA = pseudouridine(38/39/40) in tRNA. Its function is as follows. Formation of pseudouridine at positions 38, 39 and 40 in the anticodon stem and loop of transfer RNAs. In Polaromonas sp. (strain JS666 / ATCC BAA-500), this protein is tRNA pseudouridine synthase A.